The sequence spans 466 residues: Probable fibrosin-1 (466 aa).

A Glycyl lysine isopeptide (Lys-Gly) (interchain with G-Cter in SUMO2) cross-link involves residue K8. An asymmetric dimethylarginine mark is found at R229 and R239. Disordered stretches follow at residues 236–315 (AWVR…AAAA) and 410–466 (LLYS…RADR). Over residues 248–272 (GSDKERPMERREPSVTKEEKDRDLP) the composition is skewed to basic and acidic residues. At S281 the chain carries Phosphoserine. Residues 288-311 (RAGEEGARPAKESVRVKEERKEEA) show a composition bias toward basic and acidic residues. Positions 442 to 459 (APPPLVPAPRPSSPPRAP) are enriched in pro residues.

This is Probable fibrosin-1 (Fbrs) from Mus musculus (Mouse).